The sequence spans 84 residues: Double gene block protein 2 (84 aa).

Residues 1-4 (MPSA) are Lumenal-facing. The chain crosses the membrane as a helical span at residues 5-25 (NLHPIVLTGVIGLMLLIRLRC). The Cytoplasmic portion of the chain corresponds to 26-30 (TFTST). The helical transmembrane segment at 31–51 (FSLPPLVTLNQIIALSFCGLL) threads the bilayer. The Lumenal segment spans residues 52-84 (LNSISRAERACYYNYSVDSSKQQHISISTPNGK).

The protein belongs to the carmovirus double gene block protein 2 family.

The protein resides in the host endoplasmic reticulum membrane. Functionally, cell-to-cell movement function. This Carnation mottle virus (isolate China/Shanghai) (CarMV) protein is Double gene block protein 2.